The following is a 777-amino-acid chain: Gliding motility regulatory protein (777 aa).

Positions 1-108 (MDTEALKKSL…SDLNEDLSGA (108 aa)) constitute an HPt domain. His49 carries the post-translational modification Phosphohistidine; by autocatalysis. Disordered stretches follow at residues 129 to 149 (TPPAIAGARPVAPPPAPPPAP) and 164 to 212 (PAPV…KSAV). 2 stretches are compositionally biased toward pro residues: residues 139 to 149 (VAPPPAPPPAP) and 164 to 177 (PAPVQAPVAPPPTQ). The segment covering 178–197 (APVAEPGAHAAAAAPHPAAA) has biased composition (low complexity). The Histidine kinase domain occupies 270–509 (DISNEVREQL…TITLRLPQSL (240 aa)). A CheW-like domain is found at 511-645 (LMKVLLVRLG…VPDIMAEVRR (135 aa)). The Response regulatory domain occupies 660–776 (RVLLVDDSPI…EVLAQAIDRL (117 aa)). Position 709 is a 4-aspartylphosphate (Asp709).

The enzyme catalyses ATP + protein L-histidine = ADP + protein N-phospho-L-histidine.. Its function is as follows. FrzE is involved in a sensory transduction pathway that controls the frequency at which cells reverse their gliding direction. FrzE seems to be capable of autophosphorylating itself on a histidine residue and then to transfer that group to an aspartate residue in the C-terminal part of the protein. This Myxococcus xanthus protein is Gliding motility regulatory protein (frzE).